Here is a 375-residue protein sequence, read N- to C-terminus: Putative F-box protein At1g12190 (375 aa).

The F-box domain maps to 1 to 46; that stretch reads MACVKFPWELMEEILYRVPSLSLSRFKTVSKEWNTLLNDKTFIKKH.

The chain is Putative F-box protein At1g12190 from Arabidopsis thaliana (Mouse-ear cress).